Reading from the N-terminus, the 374-residue chain is Pulmonary surfactant-associated protein D (374 aa).

The first 19 residues, 1–19 (MLHFLSMLVLLVQPLGDLG), serve as a signal peptide directing secretion. S-nitrosocysteine is present on residues C34 and C39. The segment at 40-221 (SPTENGLPGR…RGIKGESGLP (182 aa)) is disordered. Residues 45–221 (GLPGRDGRDG…RGIKGESGLP (177 aa)) enclose the Collagen-like domain. Over residues 49–64 (RDGRDGREGPRGEKGD) the composition is skewed to basic and acidic residues. P77 carries the post-translational modification Hydroxyproline. K86 carries the 5-hydroxylysine modification. An N-linked (GlcNAc...) asparagine glycan is attached at N89. Residue P95 is modified to Hydroxyproline. At K98 the chain carries 5-hydroxylysine. S109 carries the phosphoserine modification. 2 stretches are compositionally biased toward low complexity: residues 137–163 (KGEA…PAGP) and 170–200 (PGEQ…RGPP). Residues P170 and P176 each carry the hydroxyproline modification. Over residues 203 to 215 (KGDRGAPGDRGIK) the composition is skewed to basic and acidic residues. The stretch at 222-253 (DSAALRQQMEALNGKLQRLEAAFSRYKKAALF) forms a coiled coil. The 116-residue stretch at 259–374 (VGDKIFRAAN…GEQRLVICEF (116 aa)) folds into the C-type lectin domain. Intrachain disulfides connect C280-C372 and C350-C364.

This sequence belongs to the SFTPD family. Oligomeric complex of 4 set of homotrimers. Post-translationally, S-nitrosylation at Cys-34 and Cys-39 alters the quaternary structure which results in a pro-inflammatory chemoattractive signaling activity with macrophages.

It localises to the secreted. It is found in the extracellular space. The protein localises to the extracellular matrix. Its subcellular location is the surface film. Contributes to the lung's defense against inhaled microorganisms, organic antigens and toxins. Interacts with compounds such as bacterial lipopolysaccharides, oligosaccharides and fatty acids and modulates leukocyte action in immune response. May participate in the extracellular reorganization or turnover of pulmonary surfactant. Binds strongly maltose residues and to a lesser extent other alpha-glucosyl moieties. This Rattus norvegicus (Rat) protein is Pulmonary surfactant-associated protein D (Sftpd).